The sequence spans 243 residues: Probable phosphatase CLI_3563 (243 aa).

Zn(2+)-binding residues include H8, H10, H16, H41, E74, H102, H132, D192, and H194.

This sequence belongs to the PHP family. The cofactor is Zn(2+).

This Clostridium botulinum (strain Langeland / NCTC 10281 / Type F) protein is Probable phosphatase CLI_3563.